The primary structure comprises 498 residues: ATP synthase subunit beta, chloroplastic (498 aa).

Over residues 1–14 (MRTNPTTSRPGVST) the composition is skewed to polar residues. Residues 1–20 (MRTNPTTSRPGVSTSEEKST) form a disordered region. 172–179 (GGAGVGKT) provides a ligand contact to ATP.

This sequence belongs to the ATPase alpha/beta chains family. In terms of assembly, F-type ATPases have 2 components, CF(1) - the catalytic core - and CF(0) - the membrane proton channel. CF(1) has five subunits: alpha(3), beta(3), gamma(1), delta(1), epsilon(1). CF(0) has four main subunits: a(1), b(1), b'(1) and c(9-12).

Its subcellular location is the plastid. It localises to the chloroplast thylakoid membrane. It carries out the reaction ATP + H2O + 4 H(+)(in) = ADP + phosphate + 5 H(+)(out). Functionally, produces ATP from ADP in the presence of a proton gradient across the membrane. The catalytic sites are hosted primarily by the beta subunits. This is ATP synthase subunit beta, chloroplastic from Hordeum vulgare (Barley).